Consider the following 134-residue polypeptide: Arginine decarboxylase proenzyme (134 aa).

The Schiff-base intermediate with substrate; via pyruvic acid role is filled by Ser-82. Ser-82 carries the post-translational modification Pyruvic acid (Ser); by autocatalysis. His-87 serves as the catalytic Proton acceptor; for processing activity. Cys-102 functions as the Proton donor; for catalytic activity in the catalytic mechanism.

Belongs to the prokaryotic AdoMetDC family. Type 1 subfamily. Heterooctamer of four alpha and four beta chains arranged as a tetramer of alpha/beta heterodimers. Pyruvate serves as cofactor. Post-translationally, is synthesized initially as an inactive proenzyme. Formation of the active enzyme involves a self-maturation process in which the active site pyruvoyl group is generated from an internal serine residue via an autocatalytic post-translational modification. Two non-identical subunits are generated from the proenzyme in this reaction, and the pyruvate is formed at the N-terminus of the alpha chain, which is derived from the carboxyl end of the proenzyme. The post-translation cleavage follows an unusual pathway, termed non-hydrolytic serinolysis, in which the side chain hydroxyl group of the serine supplies its oxygen atom to form the C-terminus of the beta chain, while the remainder of the serine residue undergoes an oxidative deamination to produce ammonia and the pyruvoyl group blocking the N-terminus of the alpha chain.

It catalyses the reaction L-arginine + H(+) = agmatine + CO2. It participates in amine and polyamine biosynthesis; agmatine biosynthesis; agmatine from L-arginine: step 1/1. Functionally, specifically catalyzes the decarboxylation of L-arginine to agmatine. Has no S-adenosylmethionine decarboxylase (AdoMetDC) activity. The sequence is that of Arginine decarboxylase proenzyme from Caldivirga maquilingensis (strain ATCC 700844 / DSM 13496 / JCM 10307 / IC-167).